Consider the following 1977-residue polypeptide: Protein rotatin homolog (1977 aa).

The disordered stretch occupies residues 141–166 (SVSSLSSNDIPSQATESADSSSNQIY).

This sequence belongs to the rotatin family. As to quaternary structure, interacts with Rcd4;this complex is recruited to daughter centrioles before their conversion to centrosomes.

The protein resides in the cytoplasm. It localises to the cytoskeleton. The protein localises to the microtubule organizing center. Its subcellular location is the centrosome. It is found in the centriole. Functionally, participes in the structural integrity of both centrioles and basal bodies and in centriole cohesion. Participates in the later stages of centriole assembly through the interaction with Rcd4 leading to the centriole to centrosome conversion. The chain is Protein rotatin homolog from Drosophila melanogaster (Fruit fly).